A 461-amino-acid chain; its full sequence is Bifunctional protein HldE (461 aa).

The interval 1-312 (MLEFLSQQKP…IRSFKSMSFE (312 aa)) is ribokinase. 191 to 194 (NKKE) provides a ligand contact to ATP. Asp-259 is an active-site residue. Residues 334–461 (FTNGCFDIVH…KIIEKIKDKK (128 aa)) form a cytidylyltransferase region.

It in the N-terminal section; belongs to the carbohydrate kinase PfkB family. This sequence in the C-terminal section; belongs to the cytidylyltransferase family. In terms of assembly, homodimer.

The enzyme catalyses D-glycero-beta-D-manno-heptose 7-phosphate + ATP = D-glycero-beta-D-manno-heptose 1,7-bisphosphate + ADP + H(+). It carries out the reaction D-glycero-beta-D-manno-heptose 1-phosphate + ATP + H(+) = ADP-D-glycero-beta-D-manno-heptose + diphosphate. It functions in the pathway nucleotide-sugar biosynthesis; ADP-L-glycero-beta-D-manno-heptose biosynthesis; ADP-L-glycero-beta-D-manno-heptose from D-glycero-beta-D-manno-heptose 7-phosphate: step 1/4. Its pathway is nucleotide-sugar biosynthesis; ADP-L-glycero-beta-D-manno-heptose biosynthesis; ADP-L-glycero-beta-D-manno-heptose from D-glycero-beta-D-manno-heptose 7-phosphate: step 3/4. Catalyzes the phosphorylation of D-glycero-D-manno-heptose 7-phosphate at the C-1 position to selectively form D-glycero-beta-D-manno-heptose-1,7-bisphosphate. In terms of biological role, catalyzes the ADP transfer from ATP to D-glycero-beta-D-manno-heptose 1-phosphate, yielding ADP-D-glycero-beta-D-manno-heptose. The polypeptide is Bifunctional protein HldE (Campylobacter jejuni (strain RM1221)).